A 131-amino-acid polypeptide reads, in one-letter code: Universal stress protein C (131 aa).

This sequence belongs to the universal stress protein A family.

The protein resides in the cytoplasm. Functionally, required for resistance to DNA-damaging agents. This Salmonella typhi protein is Universal stress protein C (uspC).